The primary structure comprises 293 residues: MPPKPDPSSSGEAPQAMQPAPPPRAEGHMYAQPEGPGQNEEAMLEQRLIRLIELMATKRHNSTLSNISFEIGRPSLEPTPEMRRNPENPYSRFSIDELFKMEIRSVSNNMANTEQMAQITADIAGLGVPTEHVAGVILKVVIMCASVSSSVYLDPAGTVEFPTGAVPLDSIIAIMKNRAGLRKVCRLYAPVVWNYMLVQNRPPSDWQAMGFQWNARFAAFDTFDYVTNGAAIQPVEGLIRRPTPEETIAHNAHKSMAIDKSNRNERLANTNVEYTGGMLGAEIVRNHRNAINQ.

The disordered stretch occupies residues 1–39 (MPPKPDPSSSGEAPQAMQPAPPPRAEGHMYAQPEGPGQN).

The protein belongs to the potexviruses coat protein family.

Its subcellular location is the virion. Functionally, required for genome encapsidation. Forms ribonucleoprotein complexes along with TGB1 helicase and viral RNA. This chain is Capsid protein, found in Solanum tuberosum (Potato).